A 282-amino-acid chain; its full sequence is MSNKIINLGSIEIANDKPFVLFGGMNVLESRDLAMSIAETYAEVTQKLGIPYVFKASFDKANRSSINSYRGPGMEEGLKIFEEIKKTFNLPLITDVHEVHQCAPVAEVVDIIQLPAFLARQTDLVVAMAKTGTIINVKKPQFLAPHEMRHIITKFNEAGNDEIILCERGSSFGYNNLVVDMLGMDEMKQSGYPVIFDATHALQRPGGRADSAGGRRAQAAELARSGMALGLAGLFIEAHPDPDNAKCDGPCALPLHQLENYLKQMKAIDDLVKSFDPIDTSK.

The protein belongs to the KdsA family.

The protein localises to the cytoplasm. The enzyme catalyses D-arabinose 5-phosphate + phosphoenolpyruvate + H2O = 3-deoxy-alpha-D-manno-2-octulosonate-8-phosphate + phosphate. It functions in the pathway carbohydrate biosynthesis; 3-deoxy-D-manno-octulosonate biosynthesis; 3-deoxy-D-manno-octulosonate from D-ribulose 5-phosphate: step 2/3. The protein operates within bacterial outer membrane biogenesis; lipopolysaccharide biosynthesis. This is 2-dehydro-3-deoxyphosphooctonate aldolase from Shewanella baltica (strain OS185).